We begin with the raw amino-acid sequence, 324 residues long: Sperm acrosome membrane-associated protein 6 (324 aa).

Positions Met1–Ala26 are cleaved as a signal peptide. Residues Cys27–Cys30 carry the CXXC motif motif. 6 disulfides stabilise this stretch: Cys27-Cys139, Cys30-Cys142, Cys41-Cys55, Cys124-Cys147, Cys128-Cys153, and Cys170-Cys226. Residues Cys27–Leu295 are Extracellular-facing. A CXXC motif motif is present at residues Cys139–Cys142. One can recognise an Ig-like domain in the interval Pro150–Ala236. An N-linked (GlcNAc...) asparagine glycan is attached at Asn243. A helical membrane pass occupies residues Phe296 to Phe316. At Phe317–Asn324 the chain is on the cytoplasmic side.

The protein belongs to the SPACA6 family. As to quaternary structure, forms a complex with IZUMO1 and TMEM81 on spermatocyte cell membrane required for fertilization. In terms of tissue distribution, detected at the sperm head, equatorial region, neck and midpiece (at protein level). Expressed in testis.

The protein resides in the cytoplasmic vesicle. The protein localises to the secretory vesicle. It localises to the acrosome membrane. Its function is as follows. Sperm protein required for fusion of sperm with the egg membrane during fertilization. May regulate the expression of sperm surface protein DCST2. The chain is Sperm acrosome membrane-associated protein 6 from Homo sapiens (Human).